A 395-amino-acid chain; its full sequence is HORMA domain-containing protein 1 (395 aa).

The region spanning 24–226 (QQSLVLVKRL…TPFHTFKVKV (203 aa)) is the HORMA domain. The segment at 329–395 (DVSESKTRSG…RKFSEPKEYV (67 aa)) is disordered. The span at 344–353 (KMANGNQPVK) shows a compositional bias: polar residues. Positions 354–363 (SSKENRKRNQ) are enriched in basic and acidic residues. Ser377 carries the phosphoserine modification. The short motif at 384 to 387 (KRRK) is the Nuclear localization signal element.

As to quaternary structure, interacts with HORMAD2. Interacts with IHO1. In terms of processing, phosphorylated at Ser-378 in a SPO11-dependent manner.

It is found in the nucleus. The protein localises to the chromosome. Plays a key role in meiotic progression. Regulates 3 different functions during meiosis: ensures that sufficient numbers of processed DNA double-strand breaks (DSBs) are available for successful homology search by increasing the steady-state numbers of single-stranded DSB ends. Promotes synaptonemal-complex formation independently of its role in homology search. Plays a key role in the male mid-pachytene checkpoint and the female meiotic prophase checkpoint: required for efficient build-up of ATR activity on unsynapsed chromosome regions, a process believed to form the basis of meiotic silencing of unsynapsed chromatin (MSUC) and meiotic prophase quality control in both sexes. The polypeptide is HORMA domain-containing protein 1 (HORMAD1) (Canis lupus familiaris (Dog)).